Reading from the N-terminus, the 372-residue chain is 4-hydroxy-3-methylbut-2-en-1-yl diphosphate synthase (flavodoxin) (372 aa).

[4Fe-4S] cluster contacts are provided by cysteine 270, cysteine 273, cysteine 305, and glutamate 312.

This sequence belongs to the IspG family. It depends on [4Fe-4S] cluster as a cofactor.

It catalyses the reaction (2E)-4-hydroxy-3-methylbut-2-enyl diphosphate + oxidized [flavodoxin] + H2O + 2 H(+) = 2-C-methyl-D-erythritol 2,4-cyclic diphosphate + reduced [flavodoxin]. The protein operates within isoprenoid biosynthesis; isopentenyl diphosphate biosynthesis via DXP pathway; isopentenyl diphosphate from 1-deoxy-D-xylulose 5-phosphate: step 5/6. Functionally, converts 2C-methyl-D-erythritol 2,4-cyclodiphosphate (ME-2,4cPP) into 1-hydroxy-2-methyl-2-(E)-butenyl 4-diphosphate. The polypeptide is 4-hydroxy-3-methylbut-2-en-1-yl diphosphate synthase (flavodoxin) (Marinobacter nauticus (strain ATCC 700491 / DSM 11845 / VT8) (Marinobacter aquaeolei)).